We begin with the raw amino-acid sequence, 3390 residues long: Genome polyprotein (3390 aa).

Positions Met-1–Met-15 are interaction with host EXOC1. The Cytoplasmic segment spans residues Met-1–Lys-100. The hydrophobic; homodimerization of capsid protein C stretch occupies residues Leu-37 to Phe-72. Positions Thr-101–Ala-114 are cleaved as a propeptide — ER anchor for the capsid protein C, removed in mature form by serine protease NS3. The chain crosses the membrane as a helical span at residues Thr-101–Thr-118. The Extracellular portion of the chain corresponds to Ser-119 to Arg-243. Asn-183 carries an N-linked (GlcNAc...) asparagine; by host glycan. A helical transmembrane segment spans residues His-244 to Gln-264. Residue Lys-265 is a topological domain, cytoplasmic. The helical transmembrane segment at Val-266–Thr-280 threads the bilayer. Residues Met-281–Thr-723 lie on the Extracellular side of the membrane. 4 disulfide bridges follow: Cys-283–Cys-310, Cys-340–Cys-401, Cys-354–Cys-385, and Cys-372–Cys-396. N-linked (GlcNAc...) asparagine; by host glycosylation is present at Asn-347. Residues Asp-378–Gly-391 form a fusion peptide region. N-linked (GlcNAc...) asparagine; by host glycosylation is present at Asn-433. 2 disulfide bridges follow: Cys-463/Cys-563 and Cys-580/Cys-611. The helical transmembrane segment at Ala-724 to Ile-744 threads the bilayer. The Cytoplasmic segment spans residues Gly-745–Asn-750. The helical transmembrane segment at Thr-751–Val-771 threads the bilayer. The Extracellular portion of the chain corresponds to Gln-772–Met-1193. Cystine bridges form between Cys-777-Cys-788, Cys-828-Cys-916, Cys-952-Cys-996, Cys-1053-Cys-1102, Cys-1064-Cys-1086, and Cys-1085-Cys-1089. Residues Asn-903 and Asn-980 are each glycosylated (N-linked (GlcNAc...) asparagine; by host). N-linked (GlcNAc...) asparagine; by host glycans are attached at residues Asn-1132 and Asn-1188. The helical transmembrane segment at Gly-1194–Leu-1218 threads the bilayer. Topologically, residues Arg-1219–Arg-1224 are cytoplasmic. Residues Glu-1225–Glu-1243 form a helical membrane-spanning segment. At Asp-1244–Thr-1267 the chain is on the lumenal side. Residues Tyr-1268 to Val-1288 traverse the membrane as a helical segment. Residue Ala-1289 is a topological domain, cytoplasmic. Residues Trp-1290–Ser-1308 traverse the membrane as a helical segment. Residues Ser-1309–Asp-1315 lie on the Lumenal side of the membrane. A helical transmembrane segment spans residues Trp-1316–Leu-1336. Residues Lys-1337–Ser-1344 lie on the Cytoplasmic side of the membrane. A helical transmembrane segment spans residues Trp-1345–Leu-1365. The Lumenal segment spans residues Arg-1366 to Asp-1368. The chain crosses the membrane as a helical span at residues Val-1369–Gly-1389. The Cytoplasmic portion of the chain corresponds to Thr-1390–Lys-1443. Positions Val-1396–Glu-1435 are interacts with and activates NS3 protease. An intramembrane region (helical) is located at residues Thr-1444–Trp-1464. At His-1465–Thr-2146 the chain is on the cytoplasmic side. A Peptidase S7 domain is found at Ser-1474–Glu-1651. Catalysis depends on charge relay system; for serine protease NS3 activity residues His-1524, Asp-1548, and Ser-1608. One can recognise a Helicase ATP-binding domain in the interval Glu-1654–Glu-1810. An important for RNA-binding region spans residues Lys-1658–Asn-1661. ATP is bound at residue Leu-1667–Thr-1674. The DEAH box signature appears at Asp-1758–His-1761. The 166-residue stretch at Gly-1821–Glu-1986 folds into the Helicase C-terminal domain. Lys-1862 carries the N6-acetyllysine; by host modification. A helical transmembrane segment spans residues Leu-2147–Gly-2167. Over Lys-2168–Gly-2169 the chain is Lumenal. An intramembrane region (helical) is located at residues Ile-2170 to Ala-2190. Asp-2191 is a topological domain (lumenal). Residues Val-2192–Ile-2212 form a helical membrane-spanning segment. At Pro-2213–Ala-2227 the chain is on the cytoplasmic side. A helical transmembrane segment spans residues Tyr-2228–Leu-2248. The Lumenal segment spans residues Glu-2249–Asp-2273. The segment at residues Leu-2274–Leu-2294 is an intramembrane region (helical). Residues Arg-2295–Val-2305 lie on the Lumenal side of the membrane. Residues Asn-2300 and Asn-2304 are each glycosylated (N-linked (GlcNAc...) asparagine; by host). The segment at residues Ser-2306–Ile-2326 is an intramembrane region (helical). The Lumenal segment spans residues Ser-2327 to Pro-2346. The chain crosses the membrane as a helical span at residues Leu-2347 to Leu-2367. Topologically, residues Gln-2368–Gln-2412 are cytoplasmic. The chain crosses the membrane as a helical span at residues Val-2413–Cys-2433. Residues Glu-2434–Thr-2458 are Lumenal-facing. Asn-2456 carries N-linked (GlcNAc...) asparagine; by host glycosylation. The chain crosses the membrane as a helical span at residues Ile-2459–Leu-2479. Residues Ser-2480–Trp-3390 are Cytoplasmic-facing. The 262-residue stretch at Thr-2492–His-2753 folds into the mRNA cap 0-1 NS5-type MT domain. Residue Ser-2546 coordinates S-adenosyl-L-methionine. Ser-2546 bears the Phosphoserine mark. Lys-2551 (for 2'-O-MTase activity) is an active-site residue. The SUMO-interacting motif motif lies at Val-2567–Leu-2570. Positions 2576, 2577, 2594, 2595, 2621, and 2622 each coordinate S-adenosyl-L-methionine. Asp-2636 acts as the For 2'-O-MTase activity in catalysis. Ile-2637 contacts S-adenosyl-L-methionine. Catalysis depends on for 2'-O-MTase activity residues Lys-2670 and Glu-2706. An S-adenosyl-L-methionine-binding site is contributed by Tyr-2708. Residues Glu-2927, His-2931, Cys-2936, and Cys-2939 each contribute to the Zn(2+) site. One can recognise a RdRp catalytic domain in the interval Ala-3018–Leu-3168. His-3202, Cys-3218, and Cys-3337 together coordinate Zn(2+).

The protein in the N-terminal section; belongs to the class I-like SAM-binding methyltransferase superfamily. mRNA cap 0-1 NS5-type methyltransferase family. In terms of assembly, homodimer. Interacts (via N-terminus) with host EXOC1 (via C-terminus); this interaction results in EXOC1 degradation through the proteasome degradation pathway. As to quaternary structure, forms heterodimers with envelope protein E in the endoplasmic reticulum and Golgi. Homodimer; in the endoplasmic reticulum and Golgi. Interacts with protein prM. Interacts with non-structural protein 1. In terms of assembly, homodimer; Homohexamer when secreted. Interacts with envelope protein E. As to quaternary structure, interacts (via N-terminus) with serine protease NS3. Forms a heterodimer with serine protease NS3. May form homooligomers. In terms of assembly, forms a heterodimer with NS2B. Interacts with NS4B. Interacts with unphosphorylated RNA-directed RNA polymerase NS5; this interaction stimulates RNA-directed RNA polymerase NS5 guanylyltransferase activity. Interacts with host SHFL. As to quaternary structure, interacts with host MAVS; this interaction inhibits the synthesis of IFN-beta. Interacts with host SHFL. Interacts with host AUP1; the interaction occurs in the presence of Dengue virus NS4B and induces lipophagy which facilitates production of virus progeny particles. Interacts with serine protease NS3. In terms of assembly, homodimer. Interacts with host STAT2; this interaction inhibits the phosphorylation of the latter, and, when all viral proteins are present (polyprotein), targets STAT2 for degradation. Interacts with serine protease NS3. Post-translationally, specific enzymatic cleavages in vivo yield mature proteins. Cleavages in the lumen of endoplasmic reticulum are performed by host signal peptidase, whereas cleavages in the cytoplasmic side are performed by serine protease NS3. Signal cleavage at the 2K-4B site requires a prior NS3 protease-mediated cleavage at the 4A-2K site. Cleaved in post-Golgi vesicles by a host furin, releasing the mature small envelope protein M, and peptide pr. This cleavage is incomplete as up to 30% of viral particles still carry uncleaved prM. In terms of processing, N-glycosylated. Post-translationally, N-glycosylated. The excreted form is glycosylated and this is required for efficient secretion of the protein from infected cells. Acetylated by host KAT5. Acetylation modulates NS3 RNA-binding and unwinding activities and plays an important positive role for viral replication. In terms of processing, sumoylation of RNA-directed RNA polymerase NS5 increases NS5 protein stability allowing proper viral RNA replication. Post-translationally, phosphorylated on serines residues. This phosphorylation may trigger NS5 nuclear localization.

The protein localises to the virion. It localises to the host nucleus. Its subcellular location is the host cytoplasm. The protein resides in the host perinuclear region. It is found in the secreted. The protein localises to the virion membrane. It localises to the host endoplasmic reticulum membrane. Its subcellular location is the host mitochondrion. It catalyses the reaction Selective hydrolysis of -Xaa-Xaa-|-Yaa- bonds in which each of the Xaa can be either Arg or Lys and Yaa can be either Ser or Ala.. The catalysed reaction is RNA(n) + a ribonucleoside 5'-triphosphate = RNA(n+1) + diphosphate. The enzyme catalyses a ribonucleoside 5'-triphosphate + H2O = a ribonucleoside 5'-diphosphate + phosphate + H(+). It carries out the reaction ATP + H2O = ADP + phosphate + H(+). It catalyses the reaction a 5'-end (5'-triphosphoguanosine)-ribonucleoside in mRNA + S-adenosyl-L-methionine = a 5'-end (N(7)-methyl 5'-triphosphoguanosine)-ribonucleoside in mRNA + S-adenosyl-L-homocysteine. The catalysed reaction is a 5'-end (N(7)-methyl 5'-triphosphoguanosine)-ribonucleoside in mRNA + S-adenosyl-L-methionine = a 5'-end (N(7)-methyl 5'-triphosphoguanosine)-(2'-O-methyl-ribonucleoside) in mRNA + S-adenosyl-L-homocysteine + H(+). Plays a role in virus budding by binding to the cell membrane and gathering the viral RNA into a nucleocapsid that forms the core of a mature virus particle. During virus entry, may induce genome penetration into the host cytoplasm after hemifusion induced by the surface proteins. Can migrate to the cell nucleus where it modulates host functions. Overcomes the anti-viral effects of host EXOC1 by sequestering and degrading the latter through the proteasome degradation pathway. In terms of biological role, inhibits RNA silencing by interfering with host Dicer. Its function is as follows. Prevents premature fusion activity of envelope proteins in trans-Golgi by binding to envelope protein E at pH6.0. After virion release in extracellular space, gets dissociated from E dimers. Functionally, acts as a chaperone for envelope protein E during intracellular virion assembly by masking and inactivating envelope protein E fusion peptide. prM is the only viral peptide matured by host furin in the trans-Golgi network probably to avoid catastrophic activation of the viral fusion activity in acidic Golgi compartment prior to virion release. prM-E cleavage is inefficient, and many virions are only partially matured. These uncleaved prM would play a role in immune evasion. May play a role in virus budding. Exerts cytotoxic effects by activating a mitochondrial apoptotic pathway through M ectodomain. May display a viroporin activity. In terms of biological role, binds to host cell surface receptor and mediates fusion between viral and cellular membranes. Envelope protein is synthesized in the endoplasmic reticulum in the form of heterodimer with protein prM. They play a role in virion budding in the ER, and the newly formed immature particle is covered with 60 spikes composed of heterodimer between precursor prM and envelope protein E. The virion is transported to the Golgi apparatus where the low pH causes dissociation of PrM-E heterodimers and formation of E homodimers. prM-E cleavage is inefficient, and many virions are only partially matured. These uncleaved prM would play a role in immune evasion. Its function is as follows. Involved in immune evasion, pathogenesis and viral replication. Once cleaved off the polyprotein, is targeted to three destinations: the viral replication cycle, the plasma membrane and the extracellular compartment. Essential for viral replication. Required for formation of the replication complex and recruitment of other non-structural proteins to the ER-derived membrane structures. Excreted as a hexameric lipoparticle that plays a role against host immune response. Antagonizing the complement function. Binds to the host macrophages and dendritic cells. Inhibits signal transduction originating from Toll-like receptor 3 (TLR3). Functionally, disrupts the host endothelial glycocalyx layer of host pulmonary microvascular endothelial cells, inducing degradation of sialic acid and shedding of heparan sulfate proteoglycans. NS1 induces expression of sialidases, heparanase, and activates cathepsin L, which activates heparanase via enzymatic cleavage. These effects are probably linked to the endothelial hyperpermeability observed in severe dengue disease. Component of the viral RNA replication complex that functions in virion assembly and antagonizes the host immune response. In terms of biological role, required cofactor for the serine protease function of NS3. May have membrane-destabilizing activity and form viroporins. Its function is as follows. Displays three enzymatic activities: serine protease, NTPase and RNA helicase. NS3 serine protease, in association with NS2B, performs its autocleavage and cleaves the polyprotein at dibasic sites in the cytoplasm: C-prM, NS2A-NS2B, NS2B-NS3, NS3-NS4A, NS4A-2K and NS4B-NS5. NS3 RNA helicase binds RNA and unwinds dsRNA in the 3' to 5' direction. Functionally, regulates the ATPase activity of the NS3 helicase activity. NS4A allows NS3 helicase to conserve energy during unwinding. Plays a role in the inhibition of the host innate immune response. Interacts with host MAVS and thereby prevents the interaction between RIGI and MAVS. In turn, IFN-beta production is impaired. Interacts with host AUP1 which mediates induction of lipophagy in host cells and facilitates production of virus progeny particles. Functions as a signal peptide for NS4B and is required for the interferon antagonism activity of the latter. In terms of biological role, induces the formation of ER-derived membrane vesicles where the viral replication takes place. Inhibits interferon (IFN)-induced host STAT1 phosphorylation and nuclear translocation, thereby preventing the establishment of cellular antiviral state by blocking the IFN-alpha/beta pathway. Its function is as follows. Replicates the viral (+) and (-) RNA genome, and performs the capping of genomes in the cytoplasm. NS5 methylates viral RNA cap at guanine N-7 and ribose 2'-O positions. Besides its role in RNA genome replication, also prevents the establishment of cellular antiviral state by blocking the interferon-alpha/beta (IFN-alpha/beta) signaling pathway. Inhibits host TYK2 and STAT2 phosphorylation, thereby preventing activation of JAK-STAT signaling pathway. This is Genome polyprotein from Dengue virus type 3 (strain Philippines/H87/1956) (DENV-3).